We begin with the raw amino-acid sequence, 150 residues long: Arginine repressor (150 aa).

It belongs to the ArgR family.

The protein localises to the cytoplasm. The protein operates within amino-acid biosynthesis; L-arginine biosynthesis [regulation]. Functionally, regulates arginine biosynthesis genes. In Staphylococcus haemolyticus (strain JCSC1435), this protein is Arginine repressor.